The chain runs to 181 residues: ATP synthase subunit b, chloroplastic (181 aa).

A helical membrane pass occupies residues 31-50; it reads NVLNIAILLSGVVYLGRNFL.

Belongs to the ATPase B chain family. In terms of assembly, F-type ATPases have 2 components, F(1) - the catalytic core - and F(0) - the membrane proton channel. F(1) has five subunits: alpha(3), beta(3), gamma(1), delta(1), epsilon(1). F(0) has four main subunits: a(1), b(1), b'(1) and c(10-14). The alpha and beta chains form an alternating ring which encloses part of the gamma chain. F(1) is attached to F(0) by a central stalk formed by the gamma and epsilon chains, while a peripheral stalk is formed by the delta, b and b' chains.

It is found in the plastid. It localises to the chloroplast thylakoid membrane. F(1)F(0) ATP synthase produces ATP from ADP in the presence of a proton or sodium gradient. F-type ATPases consist of two structural domains, F(1) containing the extramembraneous catalytic core and F(0) containing the membrane proton channel, linked together by a central stalk and a peripheral stalk. During catalysis, ATP synthesis in the catalytic domain of F(1) is coupled via a rotary mechanism of the central stalk subunits to proton translocation. Its function is as follows. Component of the F(0) channel, it forms part of the peripheral stalk, linking F(1) to F(0). The protein is ATP synthase subunit b, chloroplastic of Rhodomonas salina (Cryptomonas salina).